The sequence spans 316 residues: 4-diphosphocytidyl-2-C-methyl-D-erythritol kinase (316 aa).

The active site involves lysine 11. Residue 99–109 (PVAAGLAGGST) coordinates ATP. Residue aspartate 141 is part of the active site.

This sequence belongs to the GHMP kinase family. IspE subfamily.

It catalyses the reaction 4-CDP-2-C-methyl-D-erythritol + ATP = 4-CDP-2-C-methyl-D-erythritol 2-phosphate + ADP + H(+). It functions in the pathway isoprenoid biosynthesis; isopentenyl diphosphate biosynthesis via DXP pathway; isopentenyl diphosphate from 1-deoxy-D-xylulose 5-phosphate: step 3/6. Catalyzes the phosphorylation of the position 2 hydroxy group of 4-diphosphocytidyl-2C-methyl-D-erythritol. In Gloeothece citriformis (strain PCC 7424) (Cyanothece sp. (strain PCC 7424)), this protein is 4-diphosphocytidyl-2-C-methyl-D-erythritol kinase.